The chain runs to 143 residues: Small ribosomal subunit protein bS6 (143 aa).

Positions 100 to 143 are disordered; it reads SPIIKMKDERREVVELTTSGSEDNQKDHHKEDLDKKTDEFSEEN. 2 stretches are compositionally biased toward basic and acidic residues: residues 104–113 and 122–143; these read KMKDERREVV and DNQKDHHKEDLDKKTDEFSEEN.

This sequence belongs to the bacterial ribosomal protein bS6 family.

Binds together with bS18 to 16S ribosomal RNA. This chain is Small ribosomal subunit protein bS6, found in Hamiltonella defensa subsp. Acyrthosiphon pisum (strain 5AT).